Here is a 209-residue protein sequence, read N- to C-terminus: Molybdenum cofactor guanylyltransferase (209 aa).

GTP is bound by residues L14 to G16, K31, and D104. D104 lines the Mg(2+) pocket.

It belongs to the MobA family. Monomer. Requires Mg(2+) as cofactor.

The protein resides in the cytoplasm. The enzyme catalyses Mo-molybdopterin + GTP + H(+) = Mo-molybdopterin guanine dinucleotide + diphosphate. Its function is as follows. Transfers a GMP moiety from GTP to Mo-molybdopterin (Mo-MPT) cofactor (Moco or molybdenum cofactor) to form Mo-molybdopterin guanine dinucleotide (Mo-MGD) cofactor. In Helicobacter pylori (strain J99 / ATCC 700824) (Campylobacter pylori J99), this protein is Molybdenum cofactor guanylyltransferase.